We begin with the raw amino-acid sequence, 285 residues long: 2,4-didehydro-3-deoxy-L-rhamnonate hydrolase (285 aa).

Leucine 73 contacts pyruvate. 3 residues coordinate Mg(2+): glutamate 119, glutamate 121, and aspartate 150. Pyruvate contacts are provided by lysine 168 and threonine 238.

The protein belongs to the FAH family. As to quaternary structure, homodimer. It depends on Mg(2+) as a cofactor.

It carries out the reaction 2,4-didehydro-3-deoxy-L-rhamnonate + H2O = (S)-lactate + pyruvate + H(+). It functions in the pathway carbohydrate degradation; L-rhamnose degradation. Functionally, hydrolase that catalyzes the hydrolysis of 2,4-didehydro-3-deoxy-L-rhamnonate to pyruvate and L-lactate. Can also hydrolyze L-2,4-diketo-3-deoxylyxonate and L-2,4-diketo-3-deoxymannonate. In vitro can also use acylpyruvates such as acetylpyruvate and trimethylacetopyruvate. Catalyzes the fifth (last) step in an alternative pathway for rhamnose utilization that does not involve phosphorylated intermediates. This is 2,4-didehydro-3-deoxy-L-rhamnonate hydrolase from Sphingomonas sp. (strain SKA58).